The following is a 241-amino-acid chain: Platelet-derived growth factor subunit B (241 aa).

A signal peptide spans 1 to 20 (MNRCWALFLPLCCYLRLVSA). A propeptide spans 21-81 (EGDPIPEELY…ELESSSRGRR (61 aa)) (removed in mature form). Asn63 carries an N-linked (GlcNAc...) asparagine glycan. 3 disulfide bridges follow: Cys97/Cys141, Cys130/Cys178, and Cys134/Cys180. A propeptide spans 191-241 (RSPGTSREQRAKTPQARVTIRTVRIRRPPKGKHRKFKHTHDKAALKETLGA) (removed in mature form). Residues 217–230 (RPPKGKHRKFKHTH) show a composition bias toward basic residues. Positions 217-241 (RPPKGKHRKFKHTHDKAALKETLGA) are disordered.

It belongs to the PDGF/VEGF growth factor family. In terms of assembly, antiparallel homodimer; disulfide-linked. Antiparallel heterodimer with PDGFA; disulfide-linked. The PDGFB homodimer interacts with PDGFRA and PDGFRB homodimers, and with heterodimers formed by PDGFRA and PDGFRB. The heterodimer composed of PDGFA and PDGFB interacts with PDGFRB homodimers, and with heterodimers formed by PDGFRA and PDGFRB. Interacts with XLKD1. Interacts with LRP1. Interacts with SORL1 (via the N-terminal ectodomain). Interacts with CD82; this interaction inhibits PDGFB-mediated signaling pathway. Localized to vascular smooth muscle cells. Also weakly expressed by cortical interstitial cells but absent in tubules. Up-regulated in areas of renal fibrosis. In mice with unilateral ureteral obstruction, an increased expression in interstitial cells and in some tubules observed after day 4.

The protein localises to the secreted. Its function is as follows. Growth factor that plays an essential role in the regulation of embryonic development, cell proliferation, cell migration, survival and chemotaxis. Potent mitogen for cells of mesenchymal origin. Required for normal proliferation and recruitment of pericytes and vascular smooth muscle cells in the central nervous system, skin, lung, heart and placenta. Required for normal blood vessel development, and for normal development of kidney glomeruli. Plays an important role in wound healing. Signaling is modulated by the formation of heterodimers with PDGFA. The chain is Platelet-derived growth factor subunit B (Pdgfb) from Mus musculus (Mouse).